A 446-amino-acid polypeptide reads, in one-letter code: 3-phosphoshikimate 1-carboxyvinyltransferase (446 aa).

Lysine 21, serine 22, and arginine 26 together coordinate 3-phosphoshikimate. Lysine 21 lines the phosphoenolpyruvate pocket. Residues glycine 94 and arginine 122 each coordinate phosphoenolpyruvate. Positions 167, 169, 315, and 342 each coordinate 3-phosphoshikimate. Glutamine 169 serves as a coordination point for phosphoenolpyruvate. The active-site Proton acceptor is the aspartate 315. Positions 346 and 388 each coordinate phosphoenolpyruvate.

The protein belongs to the EPSP synthase family. As to quaternary structure, monomer.

Its subcellular location is the cytoplasm. The enzyme catalyses 3-phosphoshikimate + phosphoenolpyruvate = 5-O-(1-carboxyvinyl)-3-phosphoshikimate + phosphate. It functions in the pathway metabolic intermediate biosynthesis; chorismate biosynthesis; chorismate from D-erythrose 4-phosphate and phosphoenolpyruvate: step 6/7. In terms of biological role, catalyzes the transfer of the enolpyruvyl moiety of phosphoenolpyruvate (PEP) to the 5-hydroxyl of shikimate-3-phosphate (S3P) to produce enolpyruvyl shikimate-3-phosphate and inorganic phosphate. In Alkalilimnicola ehrlichii (strain ATCC BAA-1101 / DSM 17681 / MLHE-1), this protein is 3-phosphoshikimate 1-carboxyvinyltransferase.